We begin with the raw amino-acid sequence, 599 residues long: Aspartate--tRNA(Asp/Asn) ligase (599 aa).

L-aspartate is bound at residue Glu-174. The tract at residues 198-201 (QLFK) is aspartate. Arg-220 lines the L-aspartate pocket. Residues 220 to 222 (RDE) and Gln-229 each bind ATP. His-457 contributes to the L-aspartate binding site. Residue Glu-491 coordinates ATP. Arg-498 is a binding site for L-aspartate. ATP is bound at residue 543–546 (GLDR).

The protein belongs to the class-II aminoacyl-tRNA synthetase family. Type 1 subfamily. Homodimer.

It is found in the cytoplasm. The catalysed reaction is tRNA(Asx) + L-aspartate + ATP = L-aspartyl-tRNA(Asx) + AMP + diphosphate. In terms of biological role, aspartyl-tRNA synthetase with relaxed tRNA specificity since it is able to aspartylate not only its cognate tRNA(Asp) but also tRNA(Asn). Reaction proceeds in two steps: L-aspartate is first activated by ATP to form Asp-AMP and then transferred to the acceptor end of tRNA(Asp/Asn). The polypeptide is Aspartate--tRNA(Asp/Asn) ligase (Paraburkholderia xenovorans (strain LB400)).